We begin with the raw amino-acid sequence, 187 residues long: Protein GrpE (187 aa).

The segment at 1–25 is disordered; it reads MADEQNLDNRAPEETPAAEGTSAGE.

Belongs to the GrpE family. As to quaternary structure, homodimer.

The protein localises to the cytoplasm. In terms of biological role, participates actively in the response to hyperosmotic and heat shock by preventing the aggregation of stress-denatured proteins, in association with DnaK and GrpE. It is the nucleotide exchange factor for DnaK and may function as a thermosensor. Unfolded proteins bind initially to DnaJ; upon interaction with the DnaJ-bound protein, DnaK hydrolyzes its bound ATP, resulting in the formation of a stable complex. GrpE releases ADP from DnaK; ATP binding to DnaK triggers the release of the substrate protein, thus completing the reaction cycle. Several rounds of ATP-dependent interactions between DnaJ, DnaK and GrpE are required for fully efficient folding. This is Protein GrpE from Azotobacter vinelandii (strain DJ / ATCC BAA-1303).